The primary structure comprises 345 residues: Phosphoribosylformylglycinamidine cyclo-ligase (345 aa).

This sequence belongs to the AIR synthase family.

The protein localises to the cytoplasm. It catalyses the reaction 2-formamido-N(1)-(5-O-phospho-beta-D-ribosyl)acetamidine + ATP = 5-amino-1-(5-phospho-beta-D-ribosyl)imidazole + ADP + phosphate + H(+). Its pathway is purine metabolism; IMP biosynthesis via de novo pathway; 5-amino-1-(5-phospho-D-ribosyl)imidazole from N(2)-formyl-N(1)-(5-phospho-D-ribosyl)glycinamide: step 2/2. The sequence is that of Phosphoribosylformylglycinamidine cyclo-ligase from Synechococcus sp. (strain CC9605).